Here is a 340-residue protein sequence, read N- to C-terminus: 3-hydroxybenzoate synthase (340 aa).

Y147, R154, Y207, and R220 together coordinate substrate. Catalysis depends on E334, which acts as the Proton acceptor.

It belongs to the FkbO/Hyg5 family. Trimer.

It carries out the reaction chorismate = 3-hydroxybenzoate + pyruvate. Its function is as follows. Involved in the biosynthesis of BC325, a rapamycin analog containing a 3-hydroxybenzoate starter unit. Catalyzes the hydrolysis of chorismate via an intramolecular mechanism to yield 3-hydroxybenzoate (3HBA). The protein is 3-hydroxybenzoate synthase of Streptomyces hygroscopicus.